A 212-amino-acid chain; its full sequence is Large ribosomal subunit protein uL3 (212 aa).

The tract at residues 135–161 is disordered; it reads MTHGNSLSHRAPGSIGQNQSPGKVFKG. At Gln153 the chain carries N5-methylglutamine.

The protein belongs to the universal ribosomal protein uL3 family. In terms of assembly, part of the 50S ribosomal subunit. Forms a cluster with proteins L14 and L19. Methylated by PrmB.

One of the primary rRNA binding proteins, it binds directly near the 3'-end of the 23S rRNA, where it nucleates assembly of the 50S subunit. This chain is Large ribosomal subunit protein uL3, found in Alteromonas mediterranea (strain DSM 17117 / CIP 110805 / LMG 28347 / Deep ecotype).